A 298-amino-acid chain; its full sequence is ATP synthase gamma chain (298 aa).

This sequence belongs to the ATPase gamma chain family. F-type ATPases have 2 components, CF(1) - the catalytic core - and CF(0) - the membrane proton channel. CF(1) has five subunits: alpha(3), beta(3), gamma(1), delta(1), epsilon(1). CF(0) has three main subunits: a, b and c.

It is found in the cell inner membrane. Produces ATP from ADP in the presence of a proton gradient across the membrane. The gamma chain is believed to be important in regulating ATPase activity and the flow of protons through the CF(0) complex. This chain is ATP synthase gamma chain, found in Francisella tularensis subsp. mediasiatica (strain FSC147).